The sequence spans 63 residues: Large ribosomal subunit protein bL32 (63 aa).

The interval 1–45 (MAVQQNKKSRSRRDMRRSHDALTKPTLSVDPTTGETHLRHHMTPD) is disordered. Basic residues predominate over residues 7-16 (KKSRSRRDMR). Residues 25–35 (PTLSVDPTTGE) are compositionally biased toward polar residues.

This sequence belongs to the bacterial ribosomal protein bL32 family.

This chain is Large ribosomal subunit protein bL32, found in Legionella pneumophila (strain Paris).